We begin with the raw amino-acid sequence, 898 residues long: Conserved oligomeric Golgi complex subunit 5 (898 aa).

The segment at 1–30 is disordered; that stretch reads MNNNNNNNEGVSSSSSSSSSPLPNISSPNL. Positions 129–192 form a coiled coil; the sequence is DTLKLGVSNL…VKKLKNHLQA (64 aa). Disordered regions lie at residues 311–339, 519–551, and 679–705; these read NNNNSNNNITTNNNNNNYNNNNNNNNNNN, SNNSNSNSNNSIESSLSTSSSSSSSSSSSSSTT, and STGGVNNNSNSNNNNEIITINENSKPT. The segment covering 679–702 has biased composition (low complexity); the sequence is STGGVNNNSNSNNNNEIITINENS.

The protein localises to the golgi apparatus membrane. The chain is Conserved oligomeric Golgi complex subunit 5 (cog5) from Dictyostelium discoideum (Social amoeba).